The primary structure comprises 166 residues: Ribosome maturation factor RimP (166 aa).

Belongs to the RimP family.

The protein resides in the cytoplasm. Required for maturation of 30S ribosomal subunits. The sequence is that of Ribosome maturation factor RimP from Rickettsia akari (strain Hartford).